Here is a 554-residue protein sequence, read N- to C-terminus: MAAAPATLALDPQPQEKQKDASESSELSRLRAELAGALAEMETMKAVAEVSESTKAEAVAAVQRQCQEEVASLQAILKDSISSYETQIAALKQERQQQQQDFEEKDRELGHLKQLLARAHPLDSLEKQMEKAHEDSEKLREIVLPMEQEITELKGKLQRAEELIQEIQRRPRQPASLHGSTELLPLSRNPSPPLEPLEEPSGDAGPAAEAFAHNCDDSASISSFSLGGAAGSASLRGPQGLSPEQEETASLVSTGTLVPEGIFLPPPGYQLVPDSQWEQLQVEGRQLQKELESVSRERDELQEGLRRSNEDCAKQMQVLLAQVQNSEQLLRTLQGTVSQAQERVQLQMAELATSHKCLSQEVKRLNEENQGLRAEQLPSSALQGSEQREDQDEALPSSIQELHLLVQNTRQQARARQQAQEHEAERLRIEIVKLREALDEETAAKASLERQLRVQREETDVLEASLCSLRIETERVQQEQRKAQLTDLLSEQRAKTLRLQAELETSEQVQRDFVRLSQALQVRLERIRQAETLQQVRSILDEAPLRDIRDIKDS.

3 disordered regions span residues M1–S28, I167–A208, and G371–L395. Residues P14–S28 show a composition bias toward basic and acidic residues. Residues Q15 to Q173 are a coiled coil. Phosphoserine is present on residues S176, S180, S187, and S191. The stretch at D274–V509 forms a coiled coil.

Belongs to the rabaptin family. In terms of assembly, heterodimer with RABGEF1. The dimer binds RAB5A that has been activated by GTP-binding. Interacts with SDCCAG8; this interaction is important for ciliogenesis regulation. Interacts with RAB4A; this interaction may mediate VEGFR2 cell surface expression.

The protein localises to the cytoplasm. It is found in the early endosome. It localises to the cytoskeleton. Its subcellular location is the microtubule organizing center. The protein resides in the centrosome. The protein localises to the cilium basal body. In terms of biological role, plays a role in membrane trafficking and in homotypic early endosome fusion. Participates in arteriogenesis by regulating vascular endothelial growth factor receptor 2/VEGFR2 cell surface expression and endosomal trafficking. By interacting with SDCCAG8, localizes to centrosomes and plays a critical role in ciliogenesis. The polypeptide is Rab GTPase-binding effector protein 2 (Rabep2) (Mus musculus (Mouse)).